A 338-amino-acid polypeptide reads, in one-letter code: Cytosolic sulfotransferase 16 (338 aa).

81–86 provides a ligand contact to 3'-phosphoadenylyl sulfate; sequence KTGTTW. The active-site Proton acceptor is the histidine 143. 3'-phosphoadenylyl sulfate is bound by residues arginine 165, serine 173, tyrosine 231, and 301–303; that span reads RKG.

Belongs to the sulfotransferase 1 family. As to expression, highly expressed in roots, stems and mature leaves. Low expression in young leaves and flowers. Barely detected in siliques.

The protein localises to the cytoplasm. It catalyses the reaction (Z)-desulfoglucotropeolin + 3'-phosphoadenylyl sulfate = (Z)-glucotropeolin + adenosine 3',5'-bisphosphate + H(+). The enzyme catalyses (Z)-indolylmethyl desulfoglucosinolate + 3'-phosphoadenylyl sulfate = (Z)-glucobrassicin + adenosine 3',5'-bisphosphate + H(+). Inhibited by phosphoadenosine 5'-phosphate (PAP). Sulfotransferase that utilizes 3'-phospho-5'-adenylyl sulfate (PAPS) as sulfonate donor to catalyze the sulfate conjugation of desulfo-glucosinolates (dsGSs), the final step in the biosynthesis of the glucosinolate core structure. Substrate preference is desulfo-2-phenylethyl glucosinolate &gt; desulfo-indol-3-yl methyl glucosinolate &gt; desulfo-benzyl glucosinolate &gt; desulfo-6-methylthiohexyl glucosinolate &gt; desulfo-4-methylthiobutyl glucosinolate &gt; desulfo-3-methylthiopropyl glucosinolate &gt; desulfo-singrin &gt; desulfo-3-butenyl glucosinolate. The sequence is that of Cytosolic sulfotransferase 16 (SOT16) from Arabidopsis thaliana (Mouse-ear cress).